Consider the following 102-residue polypeptide: Large ribosomal subunit protein uL24 (102 aa).

Belongs to the universal ribosomal protein uL24 family. Part of the 50S ribosomal subunit.

Its function is as follows. One of two assembly initiator proteins, it binds directly to the 5'-end of the 23S rRNA, where it nucleates assembly of the 50S subunit. In terms of biological role, one of the proteins that surrounds the polypeptide exit tunnel on the outside of the subunit. This chain is Large ribosomal subunit protein uL24, found in Allorhizobium ampelinum (strain ATCC BAA-846 / DSM 112012 / S4) (Agrobacterium vitis (strain S4)).